Here is a 205-residue protein sequence, read N- to C-terminus: CASP-like protein 2A1 (205 aa).

Topologically, residues 1–35 (MMGDKGEKECATASSPIELGCGEGDESGNKSSMRT) are cytoplasmic. The helical transmembrane segment at 36 to 56 (VETLLRLVPVALCTVSLVVML) threads the bilayer. The Extracellular portion of the chain corresponds to 57-77 (KNSQTNDFGSLSYSDLGAFRY). A helical membrane pass occupies residues 78 to 98 (LVHANGICAGYSLLSAIFTAM). The Cytoplasmic portion of the chain corresponds to 99-106 (PRPPTMSR). The helical transmembrane segment at 107-127 (AWTFFLLDQVLTYLILAAGAV) threads the bilayer. At 128-157 (STEVVYLAYKGDEAVTWSDACSSFGGFCQK) the chain is on the extracellular side. Residues 158–178 (TTASISITFVTVLCYAVLSLI) form a helical membrane-spanning segment. At 179 to 205 (SSYKLFSKYDAPICFNGKGIEIAAFHS) the chain is on the cytoplasmic side.

The protein belongs to the Casparian strip membrane proteins (CASP) family. Homodimer and heterodimers.

It is found in the cell membrane. In Vitis vinifera (Grape), this protein is CASP-like protein 2A1.